A 646-amino-acid chain; its full sequence is Chaperone protein DnaK (646 aa).

Threonine 197 bears the Phosphothreonine; by autocatalysis mark. The tract at residues glutamine 599–lysine 646 is disordered. Residues alanine 610 to lysine 628 are compositionally biased toward polar residues. Acidic residues predominate over residues aspartate 633 to lysine 646.

This sequence belongs to the heat shock protein 70 family.

Acts as a chaperone. In Treponema denticola (strain ATCC 35405 / DSM 14222 / CIP 103919 / JCM 8153 / KCTC 15104), this protein is Chaperone protein DnaK.